A 77-amino-acid chain; its full sequence is Translation initiation factor IF-1, chloroplastic (77 aa).

Residues 1-72 (MNKQGLFQME…TKGRIVYRQR (72 aa)) form the S1-like domain.

The protein belongs to the IF-1 family. Component of the 30S ribosomal translation pre-initiation complex which assembles on the 30S ribosome in the order IF-2 and IF-3, IF-1 and N-formylmethionyl-tRNA(fMet); mRNA recruitment can occur at any time during PIC assembly.

The protein localises to the plastid. It is found in the chloroplast. Functionally, one of the essential components for the initiation of protein synthesis. Stabilizes the binding of IF-2 and IF-3 on the 30S subunit to which N-formylmethionyl-tRNA(fMet) subsequently binds. Helps modulate mRNA selection, yielding the 30S pre-initiation complex (PIC). Upon addition of the 50S ribosomal subunit IF-1, IF-2 and IF-3 are released leaving the mature 70S translation initiation complex. The polypeptide is Translation initiation factor IF-1, chloroplastic (Nephroselmis olivacea (Green alga)).